The primary structure comprises 957 residues: Dystrophin-related protein 2 (957 aa).

Spectrin repeat units lie at residues 102 to 179 (DHSG…EELE) and 231 to 337 (EQLL…QLQD). The WW domain maps to 358 to 383 (WERAISPNKVPYYINHQAQTTCWDHP). The segment at 605-661 (KHQTKCSICRQCPIKGFRYRSLKQFNVDICQTCFLTGRASKGNKLHYPIMEYYTPTT) adopts a ZZ-type; degenerate zinc-finger fold. Zn(2+)-binding residues include C610, C613, C634, and C637. S748 is subject to Phosphoserine. The segment covering 877–900 (PPTESDGSGSAGSSLASSPQQSEG) has biased composition (low complexity). Residues 877-923 (PPTESDGSGSAGSSLASSPQQSEGSHPREKGQTTPDTEAADDVGSKS) are disordered. A Phosphothreonine modification is found at T910.

Interacts with PRX; this enhances phosphorylation. Identified in a dystroglycan complex that contains at least PRX, DRP2, UTRN, DMD and DAG1. As to expression, detected in fetal brain.

It localises to the postsynaptic density. Its subcellular location is the cell projection. It is found in the dendrite. The protein localises to the perikaryon. The protein resides in the cell membrane. Required for normal myelination and for normal organization of the cytoplasm and the formation of Cajal bands in myelinating Schwann cells. Required for normal PRX location at appositions between the abaxonal surface of the myelin sheath and the Schwann cell plasma membrane. Possibly involved in membrane-cytoskeleton interactions of the central nervous system. The protein is Dystrophin-related protein 2 (DRP2) of Homo sapiens (Human).